Consider the following 254-residue polypeptide: Transmembrane protein 70, mitochondrial (254 aa).

The N-terminal 78 residues, 1–78, are a transit peptide targeting the mitochondrion; sequence MLFLALGGPW…PVCWERGVRC (78 aa). The Mitochondrial matrix portion of the chain corresponds to 79 to 112; the sequence is SHTQLDKSEDGRLIYTGNLARTVFGVKCFSYSTS. A helical membrane pass occupies residues 113 to 133; the sequence is LISLAFLPYIFAQNNVIFGSL. Topologically, residues 134–136 are mitochondrial intermembrane; it reads PLQ. Residues 137 to 157 form a helical membrane-spanning segment; that stretch reads ILFYGTIGSFTVITPALLHFL. At 158–254 the chain is on the mitochondrial matrix side; the sequence is TKGYVIRLYH…SEKKQLKEEK (97 aa).

This sequence belongs to the TMEM70 family. As to quaternary structure, homooligomer. Interacts (homooligomer form) with ATP5MC1; this interaction facilitates the oligomer formation of subunit c/ATP5MC1 (c-ring) and the c-ring membrane insertion and also protects ATP5MC1 against intramitochondrial proteolysis. Interacts with the core subunits TMEM126B, NDUFAF1, ECSIT and ACAD9 of the MCIA complex. Interacts with ATP5MC3, TMEM242 and TIMMDC1.

Its subcellular location is the mitochondrion inner membrane. Its function is as follows. Scaffold protein that participates in the c-ring assembly of mitochondrial ATP synthase (F(1)F(0) ATP synthase or complex V) by facilitating the membrane insertion and oligomer formation of the subunit c/ATP5MC1 through its interaction. Therefore, participates in the early stage of mitochondrial ATP synthase biogenesis and also protects subunit c/ATP5MC1 against intramitochondrial proteolysis. In addition, binds the mitochondrial proton-transporting ATP synthase complexes I and may play a role in the stability of its membrane-bound subassemblies. The sequence is that of Transmembrane protein 70, mitochondrial from Bos taurus (Bovine).